Reading from the N-terminus, the 336-residue chain is Serpentine receptor class gamma-9 (336 aa).

7 helical membrane passes run Leu30 to Ile50, Phe64 to Ile84, Ile111 to Thr131, Leu152 to Ile172, Phe200 to Phe220, Leu237 to Leu257, and Phe271 to Phe291.

The protein belongs to the nematode receptor-like protein srg family.

The protein localises to the membrane. This Caenorhabditis elegans protein is Serpentine receptor class gamma-9 (srg-9).